We begin with the raw amino-acid sequence, 488 residues long: UDP-glycosyltransferase 85A3 (488 aa).

UDP-alpha-D-glucose contacts are provided by residues serine 306, 363-365 (CPQ), 380-388 (HCGWNSTLE), and 402-405 (FAEQ).

Belongs to the UDP-glycosyltransferase family. In terms of tissue distribution, expressed in roots and flowers.

This chain is UDP-glycosyltransferase 85A3 (UGT85A3), found in Arabidopsis thaliana (Mouse-ear cress).